Consider the following 267-residue polypeptide: Protein isy-1 (267 aa).

A coiled-coil region spans residues 175 to 204 (LEKLIEEKNIERINKEFAEKQAQKQQTASD). Residues 195-221 (QAQKQQTASDAAPENIYKVEEDDDDDL) form a disordered region.

The protein belongs to the ISY1 family. Ubiquitously expressed.

The protein localises to the nucleus. Its function is as follows. Regulates the processing of the mir-60 microRNA (miRNA), which in turn negatively regulates the expression of the transcription factor zip-10. Does not affect the splicing of zip-10. The polypeptide is Protein isy-1 (Caenorhabditis elegans).